We begin with the raw amino-acid sequence, 310 residues long: Bifunctional phosphoglucose/phosphomannose isomerase (310 aa).

The SIS domain maps to 22–152 (FDGSFRTGTF…IRPKHEDIEE (131 aa)). Gly41, Ser42, Ser80, Ser82, Thr85, and Arg128 together coordinate D-fructose 6-phosphate. Glu202 serves as the catalytic Proton acceptor. Residues His218 and Lys306 each contribute to the D-fructose 6-phosphate site. The active-site Proton donor is the His218. The active-site Proton acceptor is the Lys306.

The protein belongs to the PGI/PMI family. Homodimer.

The catalysed reaction is alpha-D-glucose 6-phosphate = beta-D-fructose 6-phosphate. It catalyses the reaction D-mannose 6-phosphate = D-fructose 6-phosphate. Inhibited by low concentrations of erythrose 4-phosphate and 6-phosphogluconate. Its function is as follows. Dual specificity isomerase that catalyzes the isomerization of both glucose-6-phosphate and mannose-6-phosphate to fructose-6-phosphate with similar catalytic efficiency. The polypeptide is Bifunctional phosphoglucose/phosphomannose isomerase (Thermoplasma acidophilum (strain ATCC 25905 / DSM 1728 / JCM 9062 / NBRC 15155 / AMRC-C165)).